Consider the following 128-residue polypeptide: Ribonuclease P protein component (128 aa).

It belongs to the RnpA family. In terms of assembly, consists of a catalytic RNA component (M1 or rnpB) and a protein subunit.

It catalyses the reaction Endonucleolytic cleavage of RNA, removing 5'-extranucleotides from tRNA precursor.. RNaseP catalyzes the removal of the 5'-leader sequence from pre-tRNA to produce the mature 5'-terminus. It can also cleave other RNA substrates such as 4.5S RNA. The protein component plays an auxiliary but essential role in vivo by binding to the 5'-leader sequence and broadening the substrate specificity of the ribozyme. The protein is Ribonuclease P protein component of Chromohalobacter salexigens (strain ATCC BAA-138 / DSM 3043 / CIP 106854 / NCIMB 13768 / 1H11).